Consider the following 80-residue polypeptide: Cytochrome c oxidase subunit 7A1, mitochondrial (80 aa).

A mitochondrion-targeting transit peptide spans Met1–Arg21. The Mitochondrial matrix segment spans residues Leu22–Gly46. Residues Val47–Ser75 traverse the membrane as a helical segment. Residues Phe76–Lys80 are Mitochondrial intermembrane-facing.

Belongs to the cytochrome c oxidase VIIa family. In terms of assembly, component of the complex IV (CIV, cytochrome c oxidase), a multisubunit enzyme composed of 14 subunits. The complex is composed of a catalytic core of 3 subunits MT-CO1, MT-CO2 and MT-CO3, encoded in the mitochondrial DNA, and 11 supernumerary subunits COX4I1 (or COX4I2), COX5A, COX5B, COX6A2 (or COX6A1), COX6B1 (or COX6B2), COX6C, COX7A1 (or COX7A2), COX7B, COX7C, COX8B and NDUFA4, which are encoded in the nuclear genome. The complex exists as a monomer or a dimer and forms supercomplexes (SCs) in the inner mitochondrial membrane with NADH-ubiquinone oxidoreductase (complex I, CI) and ubiquinol-cytochrome c oxidoreductase (cytochrome b-c1 complex, complex III, CIII), resulting in different assemblies (supercomplex SCI(1)III(2)IV(1) and megacomplex MCI(2)III(2)IV(2)).

The protein localises to the mitochondrion inner membrane. It functions in the pathway energy metabolism; oxidative phosphorylation. In terms of biological role, component of the mitochondrial respiratory complex IV (CIV, also named cytochrome c oxidase complex), the last enzyme in the mitochondrial electron transport chain which drives oxidative phosphorylation. The CIV complex is the component of the respiratory chain that catalyzes the reduction of oxygen to water. Acts as an assembly factor that specifically drives the homodimerization of CIV complexes, mediating the formation of mitochondrial respiratory supercomplexes (respirasomes) containing two CIV: supercomplxes with two molecules of CIV show improved activity. Despite being highly expressed in brown adipose tissue, not required for thermogenesis. The sequence is that of Cytochrome c oxidase subunit 7A1, mitochondrial (COX7A1) from Saimiri sciureus (Common squirrel monkey).